The primary structure comprises 80 residues: Large ribosomal subunit protein bL28 (80 aa).

Positions 1–23 (MARVCQITGKKTRTGNNVSHANN) are disordered.

The protein belongs to the bacterial ribosomal protein bL28 family.

The polypeptide is Large ribosomal subunit protein bL28 (Cytophaga hutchinsonii (strain ATCC 33406 / DSM 1761 / CIP 103989 / NBRC 15051 / NCIMB 9469 / D465)).